Here is a 267-residue protein sequence, read N- to C-terminus: 3-methyl-2-oxobutanoate hydroxymethyltransferase (267 aa).

The Mg(2+) site is built by Asp-46 and Asp-85. Residues 46–47, Asp-85, and Lys-115 each bind 3-methyl-2-oxobutanoate; that span reads DS. Glu-117 serves as a coordination point for Mg(2+). Glu-184 functions as the Proton acceptor in the catalytic mechanism.

This sequence belongs to the PanB family. Homodecamer; pentamer of dimers. The cofactor is Mg(2+).

The protein resides in the cytoplasm. The catalysed reaction is 3-methyl-2-oxobutanoate + (6R)-5,10-methylene-5,6,7,8-tetrahydrofolate + H2O = 2-dehydropantoate + (6S)-5,6,7,8-tetrahydrofolate. It functions in the pathway cofactor biosynthesis; (R)-pantothenate biosynthesis; (R)-pantoate from 3-methyl-2-oxobutanoate: step 1/2. Functionally, catalyzes the reversible reaction in which hydroxymethyl group from 5,10-methylenetetrahydrofolate is transferred onto alpha-ketoisovalerate to form ketopantoate. This Syntrophotalea carbinolica (strain DSM 2380 / NBRC 103641 / GraBd1) (Pelobacter carbinolicus) protein is 3-methyl-2-oxobutanoate hydroxymethyltransferase.